A 179-amino-acid chain; its full sequence is Large ribosomal subunit protein uL6 (179 aa).

This sequence belongs to the universal ribosomal protein uL6 family. As to quaternary structure, part of the 50S ribosomal subunit.

Functionally, this protein binds to the 23S rRNA, and is important in its secondary structure. It is located near the subunit interface in the base of the L7/L12 stalk, and near the tRNA binding site of the peptidyltransferase center. The chain is Large ribosomal subunit protein uL6 from Prochlorococcus marinus (strain MIT 9312).